The chain runs to 258 residues: Putative cysteine-rich repeat secretory protein 61 (258 aa).

Positions 1–31 are cleaved as a signal peptide; it reads MSSSFIPKRIALVLNLAMVAIQVFFIRSVSS. 2 consecutive Gnk2-homologous domains span residues 38-140 and 146-253; these read YLYH…PTAF and DKNK…IYPF.

This sequence belongs to the cysteine-rich repeat secretory protein family.

The protein resides in the secreted. This chain is Putative cysteine-rich repeat secretory protein 61 (CRRSP61), found in Arabidopsis thaliana (Mouse-ear cress).